Here is a 473-residue protein sequence, read N- to C-terminus: Arginine biosynthesis bifunctional protein ArgJ, mitochondrial (473 aa).

Substrate contacts are provided by Thr201, Lys230, Thr241, Glu328, Asn468, and Thr473. The active-site Nucleophile is Thr241.

The protein belongs to the ArgJ family. In terms of assembly, heterodimer of an alpha and a beta chain. The alpha and beta chains are autoproteolytically processed from a single precursor protein within the mitochondrion.

Its subcellular location is the mitochondrion matrix. The enzyme catalyses N(2)-acetyl-L-ornithine + L-glutamate = N-acetyl-L-glutamate + L-ornithine. It catalyses the reaction L-glutamate + acetyl-CoA = N-acetyl-L-glutamate + CoA + H(+). It functions in the pathway amino-acid biosynthesis; L-arginine biosynthesis; L-ornithine and N-acetyl-L-glutamate from L-glutamate and N(2)-acetyl-L-ornithine (cyclic): step 1/1. The protein operates within amino-acid biosynthesis; L-arginine biosynthesis; N(2)-acetyl-L-ornithine from L-glutamate: step 1/4. Its function is as follows. Catalyzes two activities which are involved in the cyclic version of arginine biosynthesis: the synthesis of acetylglutamate from glutamate and acetyl-CoA, and of ornithine by transacetylation between acetylornithine and glutamate. This chain is Arginine biosynthesis bifunctional protein ArgJ, mitochondrial, found in Paracoccidioides brasiliensis (strain Pb18).